A 160-amino-acid chain; its full sequence is Transcription antitermination protein NusB (160 aa).

It belongs to the NusB family.

Functionally, involved in transcription antitermination. Required for transcription of ribosomal RNA (rRNA) genes. Binds specifically to the boxA antiterminator sequence of the ribosomal RNA (rrn) operons. The chain is Transcription antitermination protein NusB from Gluconobacter oxydans (strain 621H) (Gluconobacter suboxydans).